The sequence spans 497 residues: MNLIKHAAFAASFQGETDCTSHASARKFSTSGSSPLLDSTEGNGFKGHSMLAPFTAGWHSTDLEPLIIERSEGSYVYDSKGNKYLDTLAGLWCTALGGSEPRLVKAATDQLNKLPFYHSFWNSTAKPPLDLAEELISMFTAKEMGKVFFTNSGSEANDSQVKLVWYYNNALGRPNKKKIIAQSQAYHGSTLISASLSGLPAMHLKFDLPAPFVLHTDCPHYWRFGLPGEAEEEFATRLADNLENLILKEGPETVAAFIAEPVIGAGGVIPPPKTYFEKIQAVLQKYDVLFIADEVITGFGRLGTMFGSDLYNIKPDLVSLAKALSSAYVPIGATLVSPEISDVVHSQSNKIGFFAHGFTYSGHPVSCAVALEALKIYRERNIPAHVKQISPRFQEGIKAFAGSSIIGETRGVGLLLATEFANNKSPNDPFPVEWGVAQIFGAECKKRGMLVKVVGDEIAMSPPLIMSQREVDGLVSIYGEALKATEERVAELRSKKK.

A mitochondrion-targeting transit peptide spans 1–37 (MNLIKHAAFAASFQGETDCTSHASARKFSTSGSSPLL). Residue 153–154 (GS) coordinates pyridoxal 5'-phosphate. Tyr-186 contacts substrate. Pyridoxal 5'-phosphate is bound at residue Asp-293. Lys-322 serves as a coordination point for substrate. An N6-(pyridoxal phosphate)lysine modification is found at Lys-322.

Belongs to the class-III pyridoxal-phosphate-dependent aminotransferase family.

It is found in the mitochondrion. The catalysed reaction is 4-aminobutanoate + pyruvate = succinate semialdehyde + L-alanine. The enzyme catalyses 4-aminobutanoate + glyoxylate = succinate semialdehyde + glycine. Transaminase that degrades gamma-amino butyric acid (GABA). This chain is Probable gamma-aminobutyrate transaminase 2, mitochondrial, found in Oryza sativa subsp. indica (Rice).